Here is a 402-residue protein sequence, read N- to C-terminus: E3 ubiquitin-protein ligase MARCHF11 (402 aa).

The segment covering 1 to 11 (MSFEGGHGGSR) has biased composition (gly residues). Residues 1–161 (MSFEGGHGGS…SGGGDQRAGH (161 aa)) form a disordered region. A compositionally biased stretch (pro residues) spans 21–56 (EPPPQPPPPPPPTPPPGEPAPVPAAPRYLPPLPASP). Low complexity predominate over residues 111–124 (EAAAAKGGPGESEA). The RING-CH-type zinc-finger motif lies at 162–222 (QHQHHQPICK…ELCCYRYHVI (61 aa)). Zn(2+)-binding residues include Cys-170, Cys-173, Cys-186, Cys-188, His-196, Cys-199, Cys-212, and Cys-215. A run of 2 helical transmembrane segments spans residues 245–265 (MIAVILGSLFLIASVTWLLWS) and 278–298 (ILFQICYGMYGFMDLVCIGLI). The YXXL motif motif lies at 371 to 374 (YVLL). Positions 399–402 (VTSV) match the PDZ-binding motif.

Interacts (YXXL motif) with AP1M1. Interacts (via PDZ-binding motif) with LIN7A. Interacts with unidentified fucose glycoproteins.

The protein localises to the cytoplasmic vesicle membrane. It catalyses the reaction S-ubiquitinyl-[E2 ubiquitin-conjugating enzyme]-L-cysteine + [acceptor protein]-L-lysine = [E2 ubiquitin-conjugating enzyme]-L-cysteine + N(6)-ubiquitinyl-[acceptor protein]-L-lysine.. It functions in the pathway protein modification; protein ubiquitination. Its function is as follows. E3 ubiquitin-protein ligase that mediates polyubiquitination of CD4. E3 ubiquitin ligases accept ubiquitin from an E2 ubiquitin-conjugating enzyme in the form of a thioester and then directly transfer the ubiquitin to targeted substrates. May play a role in ubuquitin-dependent protein sorting in developmenting spermatids. The polypeptide is E3 ubiquitin-protein ligase MARCHF11 (Homo sapiens (Human)).